Reading from the N-terminus, the 607-residue chain is UvrABC system protein C (607 aa).

The GIY-YIG domain maps to 15 to 94; sequence ENPGVYLMKN…IKRHRPYFNV (80 aa). A UVR domain is found at 204–239; that stretch reads DQVLKLLIRLMNEASARLDYETAALRRDQIASIKEV.

This sequence belongs to the UvrC family. In terms of assembly, interacts with UvrB in an incision complex.

The protein resides in the cytoplasm. Functionally, the UvrABC repair system catalyzes the recognition and processing of DNA lesions. UvrC both incises the 5' and 3' sides of the lesion. The N-terminal half is responsible for the 3' incision and the C-terminal half is responsible for the 5' incision. The chain is UvrABC system protein C from Dehalococcoides mccartyi (strain CBDB1).